Reading from the N-terminus, the 373-residue chain is 4-hydroxy-3-methylbut-2-en-1-yl diphosphate synthase (flavodoxin) (373 aa).

[4Fe-4S] cluster contacts are provided by Cys-270, Cys-273, Cys-305, and Glu-312.

This sequence belongs to the IspG family. [4Fe-4S] cluster is required as a cofactor.

It carries out the reaction (2E)-4-hydroxy-3-methylbut-2-enyl diphosphate + oxidized [flavodoxin] + H2O + 2 H(+) = 2-C-methyl-D-erythritol 2,4-cyclic diphosphate + reduced [flavodoxin]. It participates in isoprenoid biosynthesis; isopentenyl diphosphate biosynthesis via DXP pathway; isopentenyl diphosphate from 1-deoxy-D-xylulose 5-phosphate: step 5/6. Converts 2C-methyl-D-erythritol 2,4-cyclodiphosphate (ME-2,4cPP) into 1-hydroxy-2-methyl-2-(E)-butenyl 4-diphosphate. This Pectobacterium carotovorum subsp. carotovorum (strain PC1) protein is 4-hydroxy-3-methylbut-2-en-1-yl diphosphate synthase (flavodoxin).